The chain runs to 578 residues: Translation initiation factor eIF2B subunit gamma (578 aa).

A phosphoserine mark is found at Ser-296 and Ser-300. Disordered stretches follow at residues 298 to 337 (QASF…SATS) and 535 to 578 (DDSV…LFER). Position 306 is a phosphothreonine (Thr-306). Positions 544 to 578 (EIAEETDSDDRSDEDSDDSEYTDEYEYEDDGLFER) are enriched in acidic residues.

Belongs to the eIF-2B gamma/epsilon subunits family. As to quaternary structure, component of the translation initiation factor 2B (eIF2B) complex which is a heterodecamer of two sets of five different subunits: alpha, beta, gamma, delta and epsilon. Subunits alpha, beta and delta comprise a regulatory subcomplex and subunits epsilon and gamma comprise a catalytic subcomplex. Within the complex, the hexameric regulatory complex resides at the center, with the two heterodimeric catalytic subcomplexes bound on opposite sides.

Its subcellular location is the cytoplasm. The protein localises to the cytosol. In terms of biological role, acts as a component of the translation initiation factor 2B (eIF2B) complex, which catalyzes the exchange of GDP for GTP on the eukaryotic initiation factor 2 (eIF2) complex gamma subunit. Its guanine nucleotide exchange factor activity is repressed when bound to eIF2 complex phosphorylated on the alpha subunit, thereby limiting the amount of methionyl-initiator methionine tRNA available to the ribosome and consequently global translation is repressed. It activates the synthesis of GCN4 in yeast under amino acid starvation conditions by suppressing the inhibitory effects of multiple AUG codons present in the leader of GCN4 mRNA. It may promote either repression or activation of GCN4 expression depending on amino acid availability. GCD1 stabilizes the interaction between eIF2 and GCD6 and stimulates the catalytic activity in vitro. The polypeptide is Translation initiation factor eIF2B subunit gamma (GCD1) (Saccharomyces cerevisiae (strain ATCC 204508 / S288c) (Baker's yeast)).